Here is a 901-residue protein sequence, read N- to C-terminus: Desmocollin-2 (901 aa).

An N-terminal signal peptide occupies residues 1-27 (MEAARPSGSWNGALCRLLLLTLAILIF). The propeptide occupies 28–135 (ASDACKNVTL…KEKVLRRAKR (108 aa)). N-linked (GlcNAc...) asparagine glycosylation is found at Asn-34 and Asn-166. Cadherin domains follow at residues 136-243 (RWAP…YPIF), 244-355 (TEET…LPTF), 356-471 (TRTS…GPEC), 472-579 (NPPI…FIPK), and 580-694 (KTVI…QLGK). The Extracellular portion of the chain corresponds to 136 to 694 (RWAPIPCSML…IGGGGVQLGK (559 aa)). An N-linked (GlcNAc...) (complex) asparagine glycan is attached at Asn-392. Asn-546 and Asn-629 each carry an N-linked (GlcNAc...) asparagine glycan. Residues 695–715 (WAILAILLGIALLFCILFTLV) form a helical membrane-spanning segment. Residues 716–901 (CGASGTSKQP…RTLAEACMKR (186 aa)) are Cytoplasmic-facing. Phosphoserine occurs at positions 864, 868, and 873.

Interacts with DSP, PKP2 and JUP. Interacts with DSG3; the interaction may limit the interaction of DSC3 with p38MAPK family members and therefore repress p38MAPK signaling activation. Expressed at intercalated disks in the heart, where it is colocalized with CDH2 (at protein level). Expressed in intestinal mucosal cells (at protein level).

The protein resides in the cell membrane. It localises to the cell junction. It is found in the desmosome. Functionally, a component of desmosome cell-cell junctions which are required for positive regulation of cellular adhesion. Promotes timely incorporation of DSG2 into desmosome intercellular junctions and promotes interaction of desmosome cell junctions with intermediate filament cytokeratin, via modulation of DSP phosphorylation. Plays an important role in desmosome-mediated maintenance of intestinal epithelial cell intercellular adhesion strength and barrier function. Positively regulates wound healing of intestinal mucosa via promotion of epithelial cell migration, and also plays a role in mechanotransduction of force between intestinal epithelial cells and extracellular matrix. May contribute to epidermal cell positioning (stratification) by mediating differential adhesiveness between cells that express different isoforms. May promote p38MAPK signaling activation that facilitates keratinocyte migration. This Homo sapiens (Human) protein is Desmocollin-2.